We begin with the raw amino-acid sequence, 160 residues long: Transcription elongation factor GreA (160 aa).

The stretch at 1-71 (MAEKTYPMTL…GQISTLETKI (71 aa)) forms a coiled coil.

The protein belongs to the GreA/GreB family.

Necessary for efficient RNA polymerase transcription elongation past template-encoded arresting sites. The arresting sites in DNA have the property of trapping a certain fraction of elongating RNA polymerases that pass through, resulting in locked ternary complexes. Cleavage of the nascent transcript by cleavage factors such as GreA or GreB allows the resumption of elongation from the new 3'terminus. GreA releases sequences of 2 to 3 nucleotides. This chain is Transcription elongation factor GreA, found in Streptococcus pyogenes serotype M3 (strain ATCC BAA-595 / MGAS315).